Here is a 429-residue protein sequence, read N- to C-terminus: Probable M18 family aminopeptidase 2 (429 aa).

Positions 82, 156, and 401 each coordinate Zn(2+).

It belongs to the peptidase M18 family. Requires Zn(2+) as cofactor.

The protein is Probable M18 family aminopeptidase 2 of Pseudomonas putida (strain ATCC 700007 / DSM 6899 / JCM 31910 / BCRC 17059 / LMG 24140 / F1).